The sequence spans 96 residues: UPF0235 protein VP2619 (96 aa).

Belongs to the UPF0235 family.

This chain is UPF0235 protein VP2619, found in Vibrio parahaemolyticus serotype O3:K6 (strain RIMD 2210633).